Here is a 338-residue protein sequence, read N- to C-terminus: Ketol-acid reductoisomerase (NADP(+)) (338 aa).

In terms of domain architecture, KARI N-terminal Rossmann spans Met1 to Thr181. Residues Phe24–Gln27, Arg47, Ser50, Ser52, and Asp82–Gln85 each bind NADP(+). Residue His107 is part of the active site. NADP(+) is bound at residue Gly133. In terms of domain architecture, KARI C-terminal knotted spans Thr182 to Ile327. The Mg(2+) site is built by Asp190, Glu194, Glu226, and Glu230. Ser251 provides a ligand contact to substrate.

The protein belongs to the ketol-acid reductoisomerase family. Mg(2+) serves as cofactor.

The enzyme catalyses (2R)-2,3-dihydroxy-3-methylbutanoate + NADP(+) = (2S)-2-acetolactate + NADPH + H(+). It carries out the reaction (2R,3R)-2,3-dihydroxy-3-methylpentanoate + NADP(+) = (S)-2-ethyl-2-hydroxy-3-oxobutanoate + NADPH + H(+). Its pathway is amino-acid biosynthesis; L-isoleucine biosynthesis; L-isoleucine from 2-oxobutanoate: step 2/4. It participates in amino-acid biosynthesis; L-valine biosynthesis; L-valine from pyruvate: step 2/4. In terms of biological role, involved in the biosynthesis of branched-chain amino acids (BCAA). Catalyzes an alkyl-migration followed by a ketol-acid reduction of (S)-2-acetolactate (S2AL) to yield (R)-2,3-dihydroxy-isovalerate. In the isomerase reaction, S2AL is rearranged via a Mg-dependent methyl migration to produce 3-hydroxy-3-methyl-2-ketobutyrate (HMKB). In the reductase reaction, this 2-ketoacid undergoes a metal-dependent reduction by NADPH to yield (R)-2,3-dihydroxy-isovalerate. This chain is Ketol-acid reductoisomerase (NADP(+)), found in Marinobacter nauticus (strain ATCC 700491 / DSM 11845 / VT8) (Marinobacter aquaeolei).